Reading from the N-terminus, the 118-residue chain is UPF0295 protein BC_0520 (118 aa).

The next 2 membrane-spanning stretches (helical) occupy residues 12–32 and 43–63; these read IRTF…LGVF and FMMV…WIGM.

This sequence belongs to the UPF0295 family.

The protein resides in the cell membrane. The chain is UPF0295 protein BC_0520 from Bacillus cereus (strain ATCC 14579 / DSM 31 / CCUG 7414 / JCM 2152 / NBRC 15305 / NCIMB 9373 / NCTC 2599 / NRRL B-3711).